Consider the following 268-residue polypeptide: Hemolysin C (268 aa).

CBS domains lie at 52-111 and 114-171; these read MVPR…NFSL and ILHK…IRDE.

The protein belongs to the UPF0053 family.

In terms of biological role, bacterial hemolysins are exotoxins that attack blood cell membranes and cause cell rupture by mechanisms not clearly defined. The chain is Hemolysin C (tlyC) from Brachyspira hyodysenteriae (Treponema hyodysenteriae).